The chain runs to 213 residues: Thymidylate kinase (213 aa).

Position 11 to 18 (11 to 18 (GPEGAGKT)) interacts with ATP.

Belongs to the thymidylate kinase family.

The catalysed reaction is dTMP + ATP = dTDP + ADP. In terms of biological role, phosphorylation of dTMP to form dTDP in both de novo and salvage pathways of dTTP synthesis. The sequence is that of Thymidylate kinase from Leuconostoc mesenteroides subsp. mesenteroides (strain ATCC 8293 / DSM 20343 / BCRC 11652 / CCM 1803 / JCM 6124 / NCDO 523 / NBRC 100496 / NCIMB 8023 / NCTC 12954 / NRRL B-1118 / 37Y).